We begin with the raw amino-acid sequence, 429 residues long: MSQITDVYAREILDSRGNPTLEVEVFLESGAMGRAAVPSGASTGEREALELRDGDKGRYLGKGVLKAVANVNDIIADEVIGMEATDQVGIDRKMLDLDGTEYKSKLGANAILGVSLAVAKAAADEVGLSLYQYIGGSNAKELPLPMMNIINGGAHADNNVDIQEFMIMPAGAKNFAEALRMGAEIFHALKAVLKAKGYNTAVGDEGGFAPNLKSNEEALQVIMEAITKAGFKPGEDVLLALDVASSELFKDGVYTLENEAQPQKTADQLIDFYENLVNKYPIISIEDGMAENDWDGWKKMTERLGKRIQIVGDDLFVTNPRILKEGIDKGIANSILIKLNQIGTLTETLDAIEMAKRAGYTTVISHRSGETEDTTLADLSVAVNAGQIKTGSLCRTDRVCKYNQLLRIEDELDAVALFRGKEVFYNLKK.

Gln163 lines the (2R)-2-phosphoglycerate pocket. The active-site Proton donor is the Glu205. The Mg(2+) site is built by Asp242, Glu286, and Asp313. (2R)-2-phosphoglycerate is bound by residues Lys338, Arg367, Ser368, and Lys389. Lys338 functions as the Proton acceptor in the catalytic mechanism.

Belongs to the enolase family. The cofactor is Mg(2+).

It is found in the cytoplasm. It localises to the secreted. The protein localises to the cell surface. The catalysed reaction is (2R)-2-phosphoglycerate = phosphoenolpyruvate + H2O. The protein operates within carbohydrate degradation; glycolysis; pyruvate from D-glyceraldehyde 3-phosphate: step 4/5. Catalyzes the reversible conversion of 2-phosphoglycerate (2-PG) into phosphoenolpyruvate (PEP). It is essential for the degradation of carbohydrates via glycolysis. This chain is Enolase, found in Geotalea uraniireducens (strain Rf4) (Geobacter uraniireducens).